Here is a 458-residue protein sequence, read N- to C-terminus: Exodeoxyribonuclease 7 large subunit (458 aa).

The protein belongs to the XseA family. As to quaternary structure, heterooligomer composed of large and small subunits.

Its subcellular location is the cytoplasm. The catalysed reaction is Exonucleolytic cleavage in either 5'- to 3'- or 3'- to 5'-direction to yield nucleoside 5'-phosphates.. In terms of biological role, bidirectionally degrades single-stranded DNA into large acid-insoluble oligonucleotides, which are then degraded further into small acid-soluble oligonucleotides. This Yersinia enterocolitica serotype O:8 / biotype 1B (strain NCTC 13174 / 8081) protein is Exodeoxyribonuclease 7 large subunit.